We begin with the raw amino-acid sequence, 222 residues long: Glutathione S-transferase alpha M14 (222 aa).

M1 carries the post-translational modification N-acetylmethionine. N-acetylalanine; in Glutathione S-transferase alpha M14, N-terminally processed is present on A2. Residues 3 to 83 enclose the GST N-terminal domain; sequence GKPILHYFNG…YIATKYNLYG (81 aa). K4 is modified (N6-succinyllysine). Glutathione is bound by residues Y9, 54–55, and 67–68; these read QV and QT. The GST C-terminal domain occupies 85–208; sequence DAKERALIDM…QPGSQRKPPM (124 aa). Positions 199–222 are disordered; the sequence is QPGSQRKPPMDAKKIRRSQEYFPD. Basic and acidic residues predominate over residues 206–222; that stretch reads PPMDAKKIRRSQEYFPD.

The protein belongs to the GST superfamily. Alpha family. As to quaternary structure, homodimer or heterodimer of GSTA1 and GSTA2.

It localises to the cytoplasm. It carries out the reaction RX + glutathione = an S-substituted glutathione + a halide anion + H(+). It catalyses the reaction prostaglandin A2 + glutathione = prostaglandin A2-S-(R)-glutathione. The enzyme catalyses prostaglandin J2 + glutathione = prostaglandin J2-S-(R)-glutathione. The catalysed reaction is (13S)-hydroperoxy-(9Z,11E)-octadecadienoate + 2 glutathione = (13S)-hydroxy-(9Z,11E)-octadecadienoate + glutathione disulfide + H2O. It carries out the reaction androst-5-ene-3,17-dione = androst-4-ene-3,17-dione. Functionally, glutathione S-transferase that catalyzes the nucleophilic attack of the sulfur atom of glutathione on the electrophilic groups of a wide range of exogenous and endogenous compounds. Involved in the formation of glutathione conjugates of both prostaglandin A2 (PGA2) and prostaglandin J2 (PGJ2). It also catalyzes the isomerization of D5-androstene-3,17-dione (AD) into D4-androstene-3,17-dione and may therefore play an important role in hormone biosynthesis. Through its glutathione-dependent peroxidase activity toward the fatty acid hydroperoxide (13S)-hydroperoxy-(9Z,11E)-octadecadienoate/13-HPODE it is also involved in the metabolism of oxidized linoleic acid. The polypeptide is Glutathione S-transferase alpha M14 (Sus scrofa (Pig)).